The chain runs to 526 residues: Fumitremorgin C synthase (526 aa).

A helical transmembrane segment spans residues 4–24; that stretch reads LPLSPAVLFLIIVLPILYLWI. Cys443 contacts heme.

It belongs to the cytochrome P450 family. Heme serves as cofactor.

Its subcellular location is the membrane. It catalyses the reaction tryprostatin A + reduced [NADPH--hemoprotein reductase] + O2 = fumitremorgin C + oxidized [NADPH--hemoprotein reductase] + 2 H2O + H(+). It participates in mycotoxin biosynthesis. In terms of biological role, cytochrome P450 monooxygenase; part of the gene cluster that mediates the biosynthesis of fumitremorgins, indole alkaloids that carry not only intriguing chemical structures, but also interesting biological and pharmacological activities. The biosynthesis of fumitremorgin-type alkaloids begins by condensation of the two amino acids L-tryptophan and L-proline to brevianamide F, catalyzed by the non-ribosomal peptide synthetase ftmA. Brevianamide F is then prenylated by the prenyltransferase ftmPT1/ftmB in the presence of dimethylallyl diphosphate, resulting in the formation of tryprostatin B. The three cytochrome P450 monooxygenases, ftmP450-1/ftmC, ftmP450-2/ftmE and ftmP450-3/FtmG, are responsible for the conversion of tryprostatin B to 6-hydroxytryprostatin B, tryprostatin A to fumitremorgin C and fumitremorgin C to 12,13-dihydroxyfumitremorgin C, respectively. The putative methyltransferase ftmMT/ftmD is expected for the conversion of 6-hydroxytryprostatin B to tryprostatin A. FtmPT2/FtmH catalyzes the prenylation of 12,13-dihydroxyfumitre-morgin C in the presence of dimethylallyl diphosphate, resulting in the formation of fumitremorgin B. Fumitremorgin B is further converted to verruculogen by ftmOx1/ftmF via the insertion of an endoperoxide bond between the two prenyl moieties. In some fungal species, verruculogen is further converted to fumitremorgin A, but the enzymes involved in this step have not been identified yet. In Aspergillus fumigatus (Neosartorya fumigata), this protein is Fumitremorgin C synthase.